Consider the following 463-residue polypeptide: MSNKMWGGRFTERPDEIMEDINVSIDVDRHLYAQDIAASKAHAAMLAAQGIITSGDAKNMARGLDTILSEITKGSFEFKRALEDIHMNVESRLSELIGPAAGRLHTARSRNDQVATDFRLFVRDEIDDIDAALAAYQQALATRALEFAGTVMPGFTHLQTAQPVTFGHHLLAYVEMAGRDRGRFADARERLNESPLGAAALAGTSFPIDRHATAQALGFDRPMANSLDAVSDRDFVLETLSAASICAVHLSRFAEEIVIWTSPLVGLIKLSDKFTTGSSIMPQKRNPDAAELVRAKTGRVIGALNGLLIVMKGLPLAYQKDMQEDKQGAMEAFAALSLAIRAMTGMALDLVPDEARMKAAAGEGYATATDLADWLVRTLKMPFREAHHVTGRIVALASKQGVALHELPLEAMQEVEPKITADVLGVLSVEASVKSRTSFGGTAPKNVASQAKAWLKRLEKQRK.

This sequence belongs to the lyase 1 family. Argininosuccinate lyase subfamily.

The protein resides in the cytoplasm. It carries out the reaction 2-(N(omega)-L-arginino)succinate = fumarate + L-arginine. Its pathway is amino-acid biosynthesis; L-arginine biosynthesis; L-arginine from L-ornithine and carbamoyl phosphate: step 3/3. The chain is Argininosuccinate lyase from Bradyrhizobium sp. (strain ORS 278).